We begin with the raw amino-acid sequence, 176 residues long: Prepronociceptin (176 aa).

Residues 1–19 (MKILFCDLLLLSLFSSVSS) form the signal peptide. 2 propeptides span residues 20-95 (SCQK…MQHL) and 169-176 (TLHQNGNA).

The protein belongs to the opioid neuropeptide precursor family. In terms of processing, specific enzymatic cleavages at paired basic residues probably yield other active peptides besides nociceptin. Post-translationally, the N-terminal domain contains 6 conserved cysteines thought to be involved in disulfide bonding and/or processing.

Its subcellular location is the secreted. Functionally, ligand of the opioid receptor-like receptor OPRL1. It may act as a transmitter in the brain by modulating nociceptive and locomotor behavior. May be involved in neuronal differentiation and development. Blocks nociceptin action in pain transmission by inhibiting nociceptin-induced hyperalgesia and allodynia. Its function is as follows. Has potent analgesic activity. In Bos taurus (Bovine), this protein is Prepronociceptin (PNOC).